The chain runs to 211 residues: Pyridoxine/pyridoxamine 5'-phosphate oxidase (211 aa).

Substrate-binding positions include Arg-7–Tyr-10 and Lys-65. FMN-binding positions include Arg-60–Lys-65, Tyr-75–Thr-76, Arg-81, Lys-82, and Gln-104. Residues Tyr-122, Arg-126, and Ser-130 each contribute to the substrate site. FMN is bound by residues Gln-139–Ser-140 and Trp-184. Position 190–192 (Arg-190–His-192) interacts with substrate. Arg-194 is an FMN binding site.

This sequence belongs to the pyridoxamine 5'-phosphate oxidase family. As to quaternary structure, homodimer. FMN is required as a cofactor.

It catalyses the reaction pyridoxamine 5'-phosphate + O2 + H2O = pyridoxal 5'-phosphate + H2O2 + NH4(+). The enzyme catalyses pyridoxine 5'-phosphate + O2 = pyridoxal 5'-phosphate + H2O2. It participates in cofactor metabolism; pyridoxal 5'-phosphate salvage; pyridoxal 5'-phosphate from pyridoxamine 5'-phosphate: step 1/1. It functions in the pathway cofactor metabolism; pyridoxal 5'-phosphate salvage; pyridoxal 5'-phosphate from pyridoxine 5'-phosphate: step 1/1. Catalyzes the oxidation of either pyridoxine 5'-phosphate (PNP) or pyridoxamine 5'-phosphate (PMP) into pyridoxal 5'-phosphate (PLP). The polypeptide is Pyridoxine/pyridoxamine 5'-phosphate oxidase (Aliivibrio fischeri (strain ATCC 700601 / ES114) (Vibrio fischeri)).